The primary structure comprises 96 residues: Large ribosomal subunit protein bL28 (96 aa).

Positions 1-21 are disordered; that stretch reads MSRVCELTGKGPMTGNNVSHA.

The protein belongs to the bacterial ribosomal protein bL28 family.

The sequence is that of Large ribosomal subunit protein bL28 from Jannaschia sp. (strain CCS1).